A 208-amino-acid polypeptide reads, in one-letter code: Na(+)-translocating NADH-quinone reductase subunit D (208 aa).

5 helical membrane passes run 42–62, 72–92, 103–123, 131–151, and 178–198; these read FVMAIAVTLVTGLSNLFVSLI, IIVQLAIIASLVIVVDQILKA, VFVGLIITNCIVMGRAEAFAM, FVDGIGNGLGYGSMLIIVAFF, and NGLFLLAPSAFFIIGFVIWGL.

The protein belongs to the NqrDE/RnfAE family. As to quaternary structure, composed of six subunits; NqrA, NqrB, NqrC, NqrD, NqrE and NqrF.

It localises to the cell inner membrane. The enzyme catalyses a ubiquinone + n Na(+)(in) + NADH + H(+) = a ubiquinol + n Na(+)(out) + NAD(+). Its function is as follows. NQR complex catalyzes the reduction of ubiquinone-1 to ubiquinol by two successive reactions, coupled with the transport of Na(+) ions from the cytoplasm to the periplasm. NqrA to NqrE are probably involved in the second step, the conversion of ubisemiquinone to ubiquinol. This Haemophilus influenzae (strain 86-028NP) protein is Na(+)-translocating NADH-quinone reductase subunit D.